A 359-amino-acid chain; its full sequence is Endoglucanase (359 aa).

A signal peptide spans 1 to 23 (MPLRALVAVIVTTAVMLVPRAWA). Residue E53 is the Proton donor of the active site. D110 (nucleophile) is an active-site residue.

Belongs to the glycosyl hydrolase 8 (cellulase D) family.

It catalyses the reaction Endohydrolysis of (1-&gt;4)-beta-D-glucosidic linkages in cellulose, lichenin and cereal beta-D-glucans.. Functionally, the biological conversion of cellulose to glucose generally requires three types of hydrolytic enzymes: (1) Endoglucanases which cut internal beta-1,4-glucosidic bonds; (2) Exocellobiohydrolases that cut the disaccharide cellobiose from the non-reducing end of the cellulose polymer chain; (3) Beta-1,4-glucosidases which hydrolyze the cellobiose and other short cello-oligosaccharides to glucose. This chain is Endoglucanase, found in Cellulomonas uda.